Here is a 463-residue protein sequence, read N- to C-terminus: Perilipin-5 (463 aa).

The interval methionine 1–leucine 32 is disordered. Positions methionine 1 to glutamine 123 are interaction with LIPE. Positions methionine 1–leucine 188 are essential for lipid droplet targeting. Phosphoserine is present on residues serine 17, serine 163, and serine 337. The segment covering serine 17–glycine 26 has biased composition (polar residues). An interaction with PNPLA2 and ABHD5 region spans residues valine 200 to phenylalanine 463. Positions alanine 433–phenylalanine 463 are disordered. Residues glutamine 444 to phenylalanine 463 form a necessary for mitochondria recruitment at the lipid droplet surface region.

It belongs to the perilipin family. As to quaternary structure, homooligomer. Interacts with PNPLA2; prevents interaction of PNPLA2 with ABHD5. Interacts with ABHD5; targets ABHD5 to lipid droplets and promotes interaction of ABHD5 with PNPLA2. Interacts with LIPE. In terms of processing, phosphorylated by PKA. Phosphorylated on serine in skeletal muscle at rest or with lipolytic stimulation. Highly expressed in oxidative tissues, including heart, liver, brown adipose tissue (BAT) and slow-twitch fibers of skeletal muscle. Lower expression in epididymal white adipose tissue and anterior tibialis and quadriceps. Expressed in adrenal glands. Isoform 2 has the highest expression in heart.

It localises to the lipid droplet. The protein resides in the cytoplasm. Its subcellular location is the mitochondrion. Lipid droplet-associated protein that maintains the balance between lipogenesis and lipolysis and also regulates fatty acid oxidation in oxidative tissues. Recruits mitochondria to the surface of lipid droplets and is involved in lipid droplet homeostasis by regulating both the storage of fatty acids in the form of triglycerides and the release of fatty acids for mitochondrial fatty acid oxidation. In lipid droplet triacylglycerol hydrolysis, plays a role as a scaffolding protein for three major key lipolytic players: ABHD5, PNPLA2 and LIPE. Reduces the triacylglycerol hydrolase activity of PNPLA2 by recruiting and sequestering PNPLA2 to lipid droplets. Phosphorylation by PKA enables lipolysis probably by promoting release of ABHD5 from the perilipin scaffold and by facilitating interaction of ABHD5 with PNPLA2. Also increases lipolysis through interaction with LIPE and upon PKA-mediated phosphorylation of LIPE. The chain is Perilipin-5 (Plin5) from Mus musculus (Mouse).